Consider the following 576-residue polypeptide: FtsZ-localized protein C (576 aa).

As to quaternary structure, interacts with FtsZ filaments.

The protein localises to the cytoplasm. It is found in the cell inner membrane. Membrane anchor for FtsZ. Binds and recruits FtsZ polymers to membranes early in the cell cycle. May also improve the efficiency of cytokinesis through the regulation of cell wall hydrolysis. The chain is FtsZ-localized protein C from Caulobacter vibrioides (strain NA1000 / CB15N) (Caulobacter crescentus).